A 117-amino-acid polypeptide reads, in one-letter code: Hainantoxin-XV-3 (117 aa).

An N-terminal signal peptide occupies residues 1-20 (MKLCAVIIASLLVCVAVASS). Residues 20-55 (SSDNQKEFAQEKEMTREETQSLGEHEKDDEVTGSEE) are disordered. A propeptide spanning residues 21-56 (SDNQKEFAQEKEMTREETQSLGEHEKDDEVTGSEER) is cleaved from the precursor. Over residues 23–55 (NQKEFAQEKEMTREETQSLGEHEKDDEVTGSEE) the composition is skewed to basic and acidic residues. 4 cysteine pairs are disulfide-bonded: C58/C72, C65/C78, C69/C115, and C71/C91.

It belongs to the neurotoxin 03 (Tx2) family. 02 subfamily. HNTX-XV sub-subfamily. In terms of tissue distribution, expressed by the venom gland.

The protein localises to the secreted. Functionally, putative ion channel inhibitor. This chain is Hainantoxin-XV-3, found in Cyriopagopus hainanus (Chinese bird spider).